The following is a 1082-amino-acid chain: AP-3 complex subunit beta-2 (1082 aa).

The segment at 1-30 is disordered; that stretch reads MSAAPAYSEDKGGSAGPGEPEYGHDPASGG. A phosphoserine mark is found at S272 and S282. Residues 666–677 are compositionally biased toward basic and acidic residues; the sequence is NREKRKEKEKPF. A disordered region spans residues 666–801; it reads NREKRKEKEK…KTPPGSKSAP (136 aa). The segment covering 691-700 has biased composition (acidic residues); that stretch reads ADSEPESESE. A compositionally biased stretch (low complexity) spans 704-715; the sequence is KSSSGSGSGESS. Composition is skewed to acidic residues over residues 716 to 726 and 775 to 784; these read SESDNEEEDEE and VTSESEEEQV.

Belongs to the adaptor complexes large subunit family. Adaptor protein complex 3 (AP-3) is a heterotetramer composed of two large adaptins (delta-type subunit AP3D1 and beta-type subunit AP3B1 or AP3B2), a medium adaptin (mu-type subunit AP3M1 or AP3M2) and a small adaptin (sigma-type subunit APS1 or AP3S2). AP-3 associates with the BLOC-1 complex.

It localises to the cytoplasmic vesicle. It is found in the clathrin-coated vesicle membrane. Its subcellular location is the golgi apparatus. In terms of biological role, subunit of non-clathrin- and clathrin-associated adaptor protein complex 3 (AP-3) that plays a role in protein sorting in the late-Golgi/trans-Golgi network (TGN) and/or endosomes. The AP complexes mediate both the recruitment of clathrin to membranes and the recognition of sorting signals within the cytosolic tails of transmembrane cargo molecules. AP-3 appears to be involved in the sorting of a subset of transmembrane proteins targeted to lysosomes and lysosome-related organelles. In concert with the BLOC-1 complex, AP-3 is required to target cargos into vesicles assembled at cell bodies for delivery into neurites and nerve terminals. This Mus musculus (Mouse) protein is AP-3 complex subunit beta-2 (Ap3b2).